Reading from the N-terminus, the 89-residue chain is Small ribosomal subunit protein uS15 (89 aa).

Belongs to the universal ribosomal protein uS15 family. In terms of assembly, part of the 30S ribosomal subunit. Forms a bridge to the 50S subunit in the 70S ribosome, contacting the 23S rRNA.

Functionally, one of the primary rRNA binding proteins, it binds directly to 16S rRNA where it helps nucleate assembly of the platform of the 30S subunit by binding and bridging several RNA helices of the 16S rRNA. Its function is as follows. Forms an intersubunit bridge (bridge B4) with the 23S rRNA of the 50S subunit in the ribosome. In Corynebacterium diphtheriae (strain ATCC 700971 / NCTC 13129 / Biotype gravis), this protein is Small ribosomal subunit protein uS15.